Consider the following 100-residue polypeptide: Small ribosomal subunit protein uS14c (100 aa).

This sequence belongs to the universal ribosomal protein uS14 family. Part of the 30S ribosomal subunit.

It is found in the plastid. Its subcellular location is the chloroplast. Functionally, binds 16S rRNA, required for the assembly of 30S particles. The sequence is that of Small ribosomal subunit protein uS14c from Huperzia lucidula (Shining clubmoss).